The following is a 154-amino-acid chain: SsrA-binding protein (154 aa).

Belongs to the SmpB family.

The protein localises to the cytoplasm. Required for rescue of stalled ribosomes mediated by trans-translation. Binds to transfer-messenger RNA (tmRNA), required for stable association of tmRNA with ribosomes. tmRNA and SmpB together mimic tRNA shape, replacing the anticodon stem-loop with SmpB. tmRNA is encoded by the ssrA gene; the 2 termini fold to resemble tRNA(Ala) and it encodes a 'tag peptide', a short internal open reading frame. During trans-translation Ala-aminoacylated tmRNA acts like a tRNA, entering the A-site of stalled ribosomes, displacing the stalled mRNA. The ribosome then switches to translate the ORF on the tmRNA; the nascent peptide is terminated with the 'tag peptide' encoded by the tmRNA and targeted for degradation. The ribosome is freed to recommence translation, which seems to be the essential function of trans-translation. This is SsrA-binding protein from Staphylococcus aureus (strain Mu3 / ATCC 700698).